A 208-amino-acid polypeptide reads, in one-letter code: Small ribosomal subunit protein uS5 (208 aa).

The S5 DRBM domain maps to Leu-48–Ile-111.

It belongs to the universal ribosomal protein uS5 family. In terms of assembly, part of the 30S ribosomal subunit. Contacts protein S4.

With S4 and S12 plays an important role in translational accuracy. The sequence is that of Small ribosomal subunit protein uS5 from Methanosarcina barkeri (strain Fusaro / DSM 804).